The chain runs to 342 residues: Arginase 1, mitochondrial (342 aa).

The transit peptide at 1–22 (MSRIIGRKGINYIHRLNSASFT) directs the protein to the mitochondrion. Residues S77 and 96 to 99 (GSTN) contribute to the L-ornithine site. Positions 161, 185, 187, and 189 each coordinate Mn(2+). Residue 189-191 (DIY) coordinates L-ornithine. Residue 195–197 (EGN) participates in substrate binding. Residue S224 participates in L-ornithine binding. Residues D270 and D272 each contribute to the Mn(2+) site. Residue E313 coordinates substrate.

This sequence belongs to the arginase family. Forms homohexamers. It depends on Mn(2+) as a cofactor. Expressed in vasculature of roots, root tips, cotyledons, leaves, cauline leaves, stems, sepals and pollen.

Its subcellular location is the mitochondrion. The enzyme catalyses L-arginine + H2O = urea + L-ornithine. It carries out the reaction agmatine + H2O = urea + putrescine. Its pathway is nitrogen metabolism; urea cycle; L-ornithine and urea from L-arginine: step 1/1. It participates in amine and polyamine biosynthesis; putrescine biosynthesis via agmatine pathway; putrescine from agmatine: step 1/1. Catalyzes the hydrolysis of L-arginine to urea and L-ornithine. The latter can be utilized in the urea cycle or as a precursor for the synthesis of both polyamines and proline. Possesses agmatinase activity. Catalyzes the formation of putrescine from agmatine. The sequence is that of Arginase 1, mitochondrial from Arabidopsis thaliana (Mouse-ear cress).